A 589-amino-acid chain; its full sequence is Protein sprouty (589 aa).

Disordered regions lie at residues 1–37, 102–194, and 239–320; these read MDRR…GVDH, RPSS…RPES, and LHLQ…MGLG. 2 stretches are compositionally biased toward low complexity: residues 104-135 and 148-162; these read SSLS…SSSS and NNSI…INNN. Positions 163–172 are enriched in polar residues; sequence FLSHFQSAEP. Residues 239 to 272 show a composition bias toward low complexity; it reads LHLQQHQQHLQQQQQQQQQQQQQQHLQHQQNQQH. Over residues 276-286 the composition is skewed to polar residues; sequence ATTTQATSVGS. Positions 380 to 499 constitute an SPR domain; it reads RCGRCRCEQC…CYGRFAGRGC (120 aa).

It belongs to the sprouty family. Interacts with DRK and RasGAP1 proteins of the Ras pathway. In ovary, expressed from stage 7 of oogenesis in the posterior follicle cells and during stage 9 when the follicle cells migrate posteriorly over the oocyte nucleus, expression is seen in the dorsal and lateral cells and is excluded from the ventral cells. Once the migration of follicle cells is complete expressed in the dorsal-anterior corner of the egg chamber. Expressed in the embryonic tracheal system, developing eye imaginal disk, embryonic chordotonal organ precursors, midline glia and wing imaginal disk.

It is found in the cell membrane. Functionally, inhibitor of tracheal branching that restricts branch budding by antagonizing the BNL-FGF pathway (BNL: branchless, an fgf inducer of branching). Acts as an antagonist of EGFR-mediated signaling in the eye (where it is important for cell determination) midline glia, chordotonal organs, wing and ovarian follicle cells. The polypeptide is Protein sprouty (sty) (Drosophila melanogaster (Fruit fly)).